The following is a 416-amino-acid chain: RNA-editing ligase 2, mitochondrial (416 aa).

The N-terminal 17 residues, Met-1–Phe-17, are a transit peptide targeting the mitochondrion. ATP-binding positions include Thr-29–Ile-31, Glu-56–Asn-62, Arg-79, Glu-126, Phe-173, and Lys-269–Lys-271. Lys-57 functions as the N6-AMP-lysine intermediate in the catalytic mechanism.

It belongs to the RNA ligase 2 family. As to quaternary structure, component of the RNA editing complex, a 1600 kDa complex composed of at least 20 proteins.

It localises to the mitochondrion. The enzyme catalyses ATP + (ribonucleotide)n-3'-hydroxyl + 5'-phospho-(ribonucleotide)m = (ribonucleotide)n+m + AMP + diphosphate.. RNA editing in kinetoplastid mitochondria inserts and deletes uridylates at multiple sites in pre-mRNAs as directed by guide RNAs. This chain is RNA-editing ligase 2, mitochondrial (REL2), found in Trypanosoma brucei brucei (strain 927/4 GUTat10.1).